The chain runs to 155 residues: Peptide deformylase 2 (155 aa).

Fe cation-binding residues include cysteine 90 and histidine 132. Residue glutamate 133 is part of the active site. Histidine 136 is a binding site for Fe cation.

Belongs to the polypeptide deformylase family. Fe(2+) is required as a cofactor.

The catalysed reaction is N-terminal N-formyl-L-methionyl-[peptide] + H2O = N-terminal L-methionyl-[peptide] + formate. Its function is as follows. Removes the formyl group from the N-terminal Met of newly synthesized proteins. Requires at least a dipeptide for an efficient rate of reaction. N-terminal L-methionine is a prerequisite for activity but the enzyme has broad specificity at other positions. The polypeptide is Peptide deformylase 2 (Clostridium perfringens (strain 13 / Type A)).